A 392-amino-acid polypeptide reads, in one-letter code: tRNA (guanine-N(7)-)-methyltransferase (392 aa).

S-adenosyl-L-methionine contacts are provided by Glu-123, Glu-148, and Asp-175. Substrate contacts are provided by Lys-201 and Asp-231.

This sequence belongs to the class I-like SAM-binding methyltransferase superfamily. TrmB family.

The enzyme catalyses guanosine(46) in tRNA + S-adenosyl-L-methionine = N(7)-methylguanosine(46) in tRNA + S-adenosyl-L-homocysteine. Its pathway is tRNA modification; N(7)-methylguanine-tRNA biosynthesis. Its function is as follows. Catalyzes the formation of N(7)-methylguanine at position 46 (m7G46) in tRNA. This is tRNA (guanine-N(7)-)-methyltransferase from Campylobacter jejuni subsp. jejuni serotype O:2 (strain ATCC 700819 / NCTC 11168).